A 282-amino-acid chain; its full sequence is 2-dehydro-3-deoxyphosphooctonate aldolase (282 aa).

The protein belongs to the KdsA family.

The protein localises to the cytoplasm. It catalyses the reaction D-arabinose 5-phosphate + phosphoenolpyruvate + H2O = 3-deoxy-alpha-D-manno-2-octulosonate-8-phosphate + phosphate. The protein operates within carbohydrate biosynthesis; 3-deoxy-D-manno-octulosonate biosynthesis; 3-deoxy-D-manno-octulosonate from D-ribulose 5-phosphate: step 2/3. It functions in the pathway bacterial outer membrane biogenesis; lipopolysaccharide biosynthesis. The sequence is that of 2-dehydro-3-deoxyphosphooctonate aldolase from Granulibacter bethesdensis (strain ATCC BAA-1260 / CGDNIH1).